The chain runs to 387 residues: Phosphoglycerate kinase (387 aa).

Substrate is bound by residues 21 to 23 (DLN), Arg-36, 59 to 62 (HLGR), Arg-113, and Arg-146. Residues Lys-197, Glu-314, and 340-343 (GGDT) each bind ATP.

This sequence belongs to the phosphoglycerate kinase family. As to quaternary structure, monomer.

The protein localises to the cytoplasm. The catalysed reaction is (2R)-3-phosphoglycerate + ATP = (2R)-3-phospho-glyceroyl phosphate + ADP. Its pathway is carbohydrate degradation; glycolysis; pyruvate from D-glyceraldehyde 3-phosphate: step 2/5. This Pseudomonas putida (strain ATCC 700007 / DSM 6899 / JCM 31910 / BCRC 17059 / LMG 24140 / F1) protein is Phosphoglycerate kinase.